The following is a 22-amino-acid chain: GLSRSCFGVKLDRIGSMSGLGC.

Cys6 and Cys22 are disulfide-bonded.

The protein belongs to the natriuretic peptide family.

It is found in the secreted. Its function is as follows. Hormone which plays a role in endochondral ossification through regulation of cartilaginous growth plate chondrocytes proliferation and differentiation. May also be vasoactive and natriuretic. Specifically binds and stimulates the cGMP production of the NPR2 receptor. Binds the clearance receptor NPR3. The polypeptide is C-type natriuretic peptide (NPPC) (Gallus gallus (Chicken)).